The following is a 586-amino-acid chain: Adenine deaminase (586 aa).

It belongs to the metallo-dependent hydrolases superfamily. Adenine deaminase family. It depends on Mn(2+) as a cofactor.

The enzyme catalyses adenine + H2O + H(+) = hypoxanthine + NH4(+). This Bdellovibrio bacteriovorus (strain ATCC 15356 / DSM 50701 / NCIMB 9529 / HD100) protein is Adenine deaminase.